The primary structure comprises 556 residues: uncharacterized protein (556 aa).

A disordered region spans residues 69–129; sequence RRGHTSGHAS…SSARSSSTSG (61 aa). Composition is skewed to low complexity over residues 74 to 85 and 93 to 129; these read SGHASEHTSSSR and SMSS…STSG. Residues 379–399 form a helical membrane-spanning segment; sequence LGLYIFIGVLLGLIGVIGLFI. An RING-type; atypical zinc finger spans residues 498 to 541; it reads CTICLCEYSEESPLYRELPCHHIFHPACIDPYLLKNSDLCPLCK.

The protein resides in the vacuole membrane. It is found in the cell membrane. This is an uncharacterized protein from Schizosaccharomyces pombe (strain 972 / ATCC 24843) (Fission yeast).